Consider the following 203-residue polypeptide: Urease accessory protein UreG (203 aa).

12–19 contacts GTP; that stretch reads GPVGSGKT.

This sequence belongs to the SIMIBI class G3E GTPase family. UreG subfamily. As to quaternary structure, homodimer. UreD, UreF and UreG form a complex that acts as a GTP-hydrolysis-dependent molecular chaperone, activating the urease apoprotein by helping to assemble the nickel containing metallocenter of UreC. The UreE protein probably delivers the nickel.

The protein resides in the cytoplasm. Its function is as follows. Facilitates the functional incorporation of the urease nickel metallocenter. This process requires GTP hydrolysis, probably effectuated by UreG. The chain is Urease accessory protein UreG from Alteromonas mediterranea (strain DSM 17117 / CIP 110805 / LMG 28347 / Deep ecotype).